The chain runs to 415 residues: Plasminogen activator inhibitor 2, macrophage (415 aa).

N-linked (GlcNAc...) asparagine glycans are attached at residues asparagine 23, asparagine 75, asparagine 261, and asparagine 339.

It belongs to the serpin family. Ov-serpin subfamily. Interacts with PSMB1. The signal sequence is not cleaved.

The protein localises to the cytoplasm. The protein resides in the secreted. Its subcellular location is the extracellular space. Inhibits urokinase-type plasminogen activator. The monocyte derived PAI-2 is distinct from the endothelial cell-derived PAI-1. Not required for normal murine development or survival. The protein is Plasminogen activator inhibitor 2, macrophage (Serpinb2) of Mus musculus (Mouse).